A 190-amino-acid chain; its full sequence is MPKASEIKKNIAISYDNKTYIVKDIERSVPQGRAGGSLYRMRMYDVVTGRKLDETFKDSDMIDLADLVRRQVMFSYSDGDEFVFMDNEDYTPYSLNKSAIEEEILFVNEETVGIQVVLVNEVPVVIELPTNVELEVIETDPSIKGASATSRNKPAKLSTGAVIQVPEHISTGDRIKVNVEERKFAGRAEK.

It belongs to the elongation factor P family.

In Marinomonas sp. (strain MWYL1), this protein is Elongation factor P-like protein.